The primary structure comprises 373 residues: Transcription factor NF-E2 45 kDa subunit (373 aa).

The required for interaction with MAPK8 stretch occupies residues 1 to 83 (MSPCPPQQSR…SGFPLPPPPY (83 aa)). Residues 1–206 (MSPCPPQQSR…PAAETPLALE (206 aa)) are transactivation domain. 2 consecutive short sequence motifs (PXY motif) follow at residues 61–65 (PPTTY) and 79–83 (PPPPY). The tract at residues 127 to 150 (LDIGLPAGPPKPQEDPESDSGLSL) is disordered. S157 bears the Phosphoserine; by MAPK8 mark. Phosphoserine; by PKA is present on S170. The interval 205 to 226 (LEPSSGPVRAKPTARGEAGSRD) is disordered. The region spanning 266 to 329 (LVRDIRRRGK…EVMRQQLTEL (64 aa)) is the bZIP domain. The basic motif stretch occupies residues 268 to 287 (RDIRRRGKNKVAAQNCRKRK). The leucine-zipper stretch occupies residues 291-298 (IVQLEREL). K368 is covalently cross-linked (Glycyl lysine isopeptide (Lys-Gly) (interchain with G-Cter in SUMO1)).

It belongs to the bZIP family. CNC subfamily. In terms of assembly, homodimer; can bind DNA as a homodimer. Erythroid transcription activator nuclear factor erythroid-derived 2 (NF-E2), composed of a heterodimer of NFE2 and MAFK, possesses transactivation activity on beta-globin. Also forms high affinity heterodimer with MAFG; the interaction promotes erythropoiesis. Interacts (via the PXY motif 1) with ITCH (via the WW 1 domain); the interaction promotes 'Lys63'-linked ubiquitination of NFE2, translocates it to the cytoplasm and inhibits its transactivation activity. Interacts with KMT2D/MLL2; the interaction promotes transactivation of the beta-globin locus. Interacts with MAPK8 (phosphorylated form); the interaction leads to phosphorylation of NFE2 in undifferentiated cells. Phosphorylated on serine residues. In undifferentiated erythrocytes, phosphorylated by MAPK8 which then leads to ubiquitination and protein degradation. Post-translationally, sumoylated. Sumoylation is required for translocation to nuclear bodies PODs, anchoring to the gene loci, and transactivation of the beta-globin gene. In terms of processing, ubiquitinated mainly by 'Lys63'-linked ubiquitin. Polyubiquitination with 'Lys63'-linked ubiquitin by ITCH retains NFE2 in the cytoplasm preventing its transactivation activity. In undifferentiated erythrocyte, ubiquitinated after MAPK8-mediatd phosphorylation leading to protein degradation. In terms of tissue distribution, expressed in hematopoietic cells and also in colon and testis.

The protein localises to the nucleus. Its subcellular location is the PML body. It is found in the cytoplasm. In terms of biological role, component of the NF-E2 complex essential for regulating erythroid and megakaryocytic maturation and differentiation. Binds to the hypersensitive site 2 (HS2) of the beta-globin control region (LCR). This subunit (NFE2) recognizes the TCAT/C sequence of the AP-1-like core palindrome present in a number of erythroid and megakaryocytic gene promoters. Requires MAFK or other small MAF proteins for binding to the NF-E2 motif. May play a role in all aspects of hemoglobin production from globin and heme synthesis to procurement of iron. In Homo sapiens (Human), this protein is Transcription factor NF-E2 45 kDa subunit (NFE2).